The sequence spans 76 residues: Precursor of CEP7 (76 aa).

Residues Met1–Gly27 form the signal peptide. Residues Arg28–Asp61 constitute a propeptide that is removed on maturation. N-linked (GlcNAc...) asparagine glycans are attached at residues Asn37 and Asn48. The interval Leu49–His76 is disordered. 3 positions are modified to hydroxyproline: Pro65, Pro68, and Pro72.

Belongs to the C-terminally encoded plant signaling peptide (CEP) family. Interacts with CEP receptors (e.g. CEPR1 and CEPR2). In terms of processing, the mature small signaling peptide is generated by proteolytic processing of the longer precursor.

The protein localises to the secreted. Its subcellular location is the extracellular space. The protein resides in the apoplast. In terms of biological role, extracellular signaling peptide that may regulate primary root growth rate and systemic nitrogen (N)-demand signaling. Mediates up-regulation of genes involved in N uptake and assimilation pathways. The protein is Precursor of CEP7 of Arabidopsis thaliana (Mouse-ear cress).